Here is a 211-residue protein sequence, read N- to C-terminus: Pyrrolidone-carboxylate peptidase 1 (211 aa).

Catalysis depends on residues Glu79, Cys142, and His164.

Belongs to the peptidase C15 family. In terms of assembly, homotetramer.

It is found in the cytoplasm. It carries out the reaction Release of an N-terminal pyroglutamyl group from a polypeptide, the second amino acid generally not being Pro.. Functionally, removes 5-oxoproline from various penultimate amino acid residues except L-proline. The protein is Pyrrolidone-carboxylate peptidase 1 (pcp1) of Saccharolobus solfataricus (strain ATCC 35092 / DSM 1617 / JCM 11322 / P2) (Sulfolobus solfataricus).